A 901-amino-acid chain; its full sequence is MSSPRPSTSSTSSDSGLSVDTTAYPEESKYTSTAPGAGGLSDENRYRDVEEGEAGADEPFLPSAKKQAASGSRTSRLIWGLVILCVAGWLWGLVLFVTQNRSAQQSVSEALQSHESGAISGSSSSGKPVTLEQVLTGQWLPRSHAVSWIAGPNGEDGLLVEQGEDQGKGYLRVDDIRSRKGDATSQESRVLMEKAIVQVDGRTIFPVSTWPSPNLNKVLLLSEREKNWRHSFTGKYWIFDVATQTAQPLDPSNPDGRVQLAIWSPTSDMVAFVRDNNLYLRRLSSKEVVPITKDGGADLFYGIPDWVYEEEVFSGNSVTWWSGDGKYVAFLRTNETAVPEFPVQYYLSRPSGKRPPPGLEDYPEVREIKYPKAGAPNPVVSLQFYDVEKQEVFSIEAPDDFEDDDRIVIEIVWGTEGKILVRATNRESDVLKVFLFDTKARTSKLVRTENVADIDGGWVEPTQYTWFIPADPSNGRPHDGYLDTVIHEGYEHLGYFTPLDNSEPILLTQGEWEVVDAPTAVDLRKGIVYFISTKESPTERHLYQVNLDGSNLKPLTDTSKPGYYDVSFSHGTGYALLSYRGPSIPWQAIVNTETDELKYEETIEDNAGLARMVDSYALPTEIYQNVTIDGFTLQVVERRPPHFNPAKKYPVLFYLYNGPRSQTVDRKFSIDFQSYVASSLGYIVVTVDGRGTGFSGRKTRCIVRGNLGYYEAYDQITTANLWGEKPYVDETRMSIWGWSYGGFMTLKTLEQDAGQTFQYGMAVAPVTDWRHYDSIYTERYMHTPAHNPNGYDNTSITDMTALQQTVRFLVIHGASDDNVHIQNTLVLVDKLDLAGVQNYDLHFYPDSDHSINFHNAHRMVYERLSSWLVNAFNDEWHRIADPVPDDSMWEKVKRSLPMLVN.

The segment covering 1-22 has biased composition (low complexity); that stretch reads MSSPRPSTSSTSSDSGLSVDTT. A disordered region spans residues 1–67; it reads MSSPRPSTSS…EPFLPSAKKQ (67 aa). At 1–76 the chain is on the cytoplasmic side; that stretch reads MSSPRPSTSS…QAASGSRTSR (76 aa). The chain crosses the membrane as a helical; Signal-anchor for type II membrane protein span at residues 77-97; that stretch reads LIWGLVILCVAGWLWGLVLFV. At 98–901 the chain is on the vacuolar side; it reads TQNRSAQQSV…VKRSLPMLVN (804 aa). N-linked (GlcNAc...) asparagine glycosylation is found at Asn334 and Asn625. The active-site Charge relay system is the Ser739. Asn793 carries N-linked (GlcNAc...) asparagine glycosylation. Active-site charge relay system residues include Asp816 and His849.

This sequence belongs to the peptidase S9B family.

The protein localises to the vacuole membrane. The enzyme catalyses Release of an N-terminal dipeptide, Xaa-Yaa-|-Zaa-, from a polypeptide, preferentially when Yaa is Pro, provided Zaa is neither Pro nor hydroxyproline.. Its function is as follows. Type IV dipeptidyl-peptidase which removes N-terminal dipeptides sequentially from polypeptides having unsubstituted N-termini provided that the penultimate residue is proline. The sequence is that of Dipeptidyl-aminopeptidase B (dapB) from Aspergillus niger.